The sequence spans 388 residues: Transcriptional regulatory protein EmbR (388 aa).

The ompR/PhoB-type DNA-binding region spans Ala2–Ile105. The FHA domain maps to Thr308–Ile357.

This sequence belongs to the AfsR/DnrI/RedD regulatory family. Phosphorylated on threonine residue(s).

Its function is as follows. Positively regulates the transcription of the embCAB operon. Exhibits ATPase and GTPase activities. The sequence is that of Transcriptional regulatory protein EmbR (embR) from Mycobacterium bovis (strain ATCC BAA-935 / AF2122/97).